A 425-amino-acid polypeptide reads, in one-letter code: Kynurenine/alpha-aminoadipate aminotransferase, mitochondrial (425 aa).

Residues 1–29 (MNYARFITATSAARKPSTIRVMTEILSKA) constitute a mitochondrion transit peptide. Arg20 contributes to the substrate binding site. Lys69 is modified (N6-acetyllysine). The substrate site is built by Tyr74 and Tyr142. Positions 178–208 (WKPEDSKNPKKNSPKFLYTVPNGNNPSGNSL) are disordered. N6-acetyllysine is present on Lys179. Residues 198-208 (PNGNNPSGNSL) show a composition bias toward polar residues. A substrate-binding site is contributed by Asn202. The residue at position 263 (Lys263) is an N6-(pyridoxal phosphate)lysine; alternate. 2 positions are modified to N6-acetyllysine; alternate: Lys263 and Lys339. N6-succinyllysine; alternate is present on residues Lys263 and Lys339. Position 399 (Arg399) interacts with substrate. The residue at position 422 (Lys422) is an N6-acetyllysine.

Belongs to the class-I pyridoxal-phosphate-dependent aminotransferase family. In terms of assembly, homodimer. Pyridoxal 5'-phosphate is required as a cofactor.

Its subcellular location is the mitochondrion. The enzyme catalyses L-kynurenine + 2-oxoglutarate = kynurenate + L-glutamate + H2O. It carries out the reaction L-2-aminoadipate + 2-oxoglutarate = 2-oxoadipate + L-glutamate. It catalyses the reaction glycine + 2-oxoglutarate = glyoxylate + L-glutamate. The catalysed reaction is L-kynurenine + glyoxylate = kynurenate + glycine + H2O. The enzyme catalyses 3-hydroxy-L-kynurenine + glyoxylate = xanthurenate + glycine + H2O. It carries out the reaction 2-oxohexanoate + L-kynurenine = L-2-aminohexanoate + kynurenate + H2O. It catalyses the reaction 3-phenylpyruvate + L-kynurenine = kynurenate + L-phenylalanine + H2O. The catalysed reaction is 4-methylsulfanyl-2-oxobutanoate + L-kynurenine = kynurenate + L-methionine + H2O. The enzyme catalyses 2-oxo-3-sulfanylpropanoate + L-kynurenine = kynurenate + L-cysteine + H2O. It carries out the reaction indole-3-pyruvate + L-kynurenine = kynurenate + L-tryptophan + H2O. It catalyses the reaction 2-oxopentanoate + L-kynurenine = L-2-aminopentanoate + kynurenate + H2O. The catalysed reaction is 4-methyl-2-oxopentanoate + L-kynurenine = kynurenate + L-leucine + H2O. The enzyme catalyses glyoxylate + L-methionine = 4-methylsulfanyl-2-oxobutanoate + glycine. It carries out the reaction L-2-aminoadipate + glyoxylate = 2-oxoadipate + glycine. It catalyses the reaction L-tyrosine + glyoxylate = 3-(4-hydroxyphenyl)pyruvate + glycine. The catalysed reaction is glyoxylate + L-phenylalanine = 3-phenylpyruvate + glycine. The enzyme catalyses L-tryptophan + glyoxylate = indole-3-pyruvate + glycine. It carries out the reaction L-leucine + glyoxylate = 4-methyl-2-oxopentanoate + glycine. It catalyses the reaction 2-oxobutanoate + L-kynurenine = (2S)-2-aminobutanoate + kynurenate + H2O. The catalysed reaction is 2-oxoadipate + L-kynurenine = L-2-aminoadipate + kynurenate + H2O. It participates in amino-acid degradation; L-lysine degradation via saccharopine pathway; glutaryl-CoA from L-lysine: step 4/6. In terms of biological role, transaminase with broad substrate specificity. Has transaminase activity towards aminoadipate, kynurenine, methionine and glutamate. Shows activity also towards tryptophan, aspartate and hydroxykynurenine. Accepts a variety of oxo-acids as amino-group acceptors, with a preference for 2-oxoglutarate, 2-oxocaproic acid, phenylpyruvate and alpha-oxo-gamma-methiol butyric acid. Can also use glyoxylate as amino-group acceptor (in vitro). The sequence is that of Kynurenine/alpha-aminoadipate aminotransferase, mitochondrial from Bos taurus (Bovine).